The primary structure comprises 437 residues: Phosphoglucosamine mutase (437 aa).

Catalysis depends on Ser93, which acts as the Phosphoserine intermediate. The Mg(2+) site is built by Ser93, Asp230, Asp232, and Asp234. At Ser93 the chain carries Phosphoserine.

The protein belongs to the phosphohexose mutase family. Mg(2+) is required as a cofactor. Post-translationally, activated by phosphorylation.

The enzyme catalyses alpha-D-glucosamine 1-phosphate = D-glucosamine 6-phosphate. Functionally, catalyzes the conversion of glucosamine-6-phosphate to glucosamine-1-phosphate. The protein is Phosphoglucosamine mutase of Clavibacter michiganensis subsp. michiganensis (strain NCPPB 382).